Reading from the N-terminus, the 61-residue chain is Small ribosomal subunit protein uS14 (61 aa).

Cys-24, Cys-27, Cys-40, and Cys-43 together coordinate Zn(2+).

It belongs to the universal ribosomal protein uS14 family. Zinc-binding uS14 subfamily. Part of the 30S ribosomal subunit. Contacts proteins S3 and S10. Zn(2+) is required as a cofactor.

Its function is as follows. Binds 16S rRNA, required for the assembly of 30S particles and may also be responsible for determining the conformation of the 16S rRNA at the A site. This is Small ribosomal subunit protein uS14 from Parafrankia sp. (strain EAN1pec).